Here is a 296-residue protein sequence, read N- to C-terminus: Putative ankyrin repeat protein FPV216 (296 aa).

ANK repeat units lie at residues S73–T102 and L107–I136.

This is Putative ankyrin repeat protein FPV216 from Fowlpox virus (strain NVSL) (FPV).